The primary structure comprises 218 residues: Mitochondrial fission factor (218 aa).

At 1 to 198 (MAEISRIQYE…ENKERAKREM (198 aa)) the chain is on the cytoplasmic side. The residue at position 89 (Thr-89) is a Phosphothreonine. 4 positions are modified to phosphoserine: Ser-129, Ser-131, Ser-146, and Ser-171. The stretch at 167-198 (VDAASLRRQIIKLNRRLQLLEEENKERAKREM) forms a coiled coil. A helical; Anchor for type IV membrane protein membrane pass occupies residues 199-216 (VMYSITVAFWLLNSWLWF). Residues 217 to 218 (RR) lie on the Mitochondrial intermembrane side of the membrane.

This sequence belongs to the Tango11 family. As to quaternary structure, homodimer. Interacts with DNM1L. Interacts with C11orf65/MFI; the interaction inhibits MFF interaction with DNM1L.

It is found in the mitochondrion outer membrane. It localises to the peroxisome. The protein resides in the cytoplasmic vesicle. Its subcellular location is the secretory vesicle. The protein localises to the synaptic vesicle. Functionally, plays a role in mitochondrial and peroxisomal fission. Promotes the recruitment and association of the fission mediator dynamin-related protein 1 (DNM1L) to the mitochondrial surface. May be involved in regulation of synaptic vesicle membrane dynamics by recruitment of DNM1L to clathrin-containing vesicles. This Bos taurus (Bovine) protein is Mitochondrial fission factor (MFF).